Here is a 425-residue protein sequence, read N- to C-terminus: MTAIIDIFAREILDSRGNPTVEVDVTLEDGTMGRAAVPSGASTGAHEAVEKRDGDKARYLGKGVLEAVAAVNGEIAENLIGEDATEQVAIDRMMIELDGTPNKGRLGANAILGVSLAVAKAAAEACSQPLYRYVGGAGARVLPVPMMNIINGGEHADNPIDIQEFMIMPVAAENIREAVRMGSEVFHTLKKELSSAGLATGVGDEGGFAPNLSSTRDALDFILKAIEKAGYQPGDDIMLALDCASTEYFKGGKYEMAGEGKSLSPAENVAYLEALCNDYPILSIEDGCAEDDWDGWKLLTDTLGGRVQLVGDDLFVTNPARLAEGIAKGCGNSLLVKVNQIGTLTETLDAVRMADRARYTSVMSHRSGETEDATIADLAVATNCGQIKTGSLARSDRLAKYNQLIRIEEMLGATAEYAGKSILRG.

Residue Q163 coordinates (2R)-2-phosphoglycerate. E205 serves as the catalytic Proton donor. Residues D242, E285, and D312 each contribute to the Mg(2+) site. 4 residues coordinate (2R)-2-phosphoglycerate: K337, R366, S367, and K388. K337 (proton acceptor) is an active-site residue.

Belongs to the enolase family. The cofactor is Mg(2+).

It localises to the cytoplasm. The protein localises to the secreted. It is found in the cell surface. It carries out the reaction (2R)-2-phosphoglycerate = phosphoenolpyruvate + H2O. It participates in carbohydrate degradation; glycolysis; pyruvate from D-glyceraldehyde 3-phosphate: step 4/5. Functionally, catalyzes the reversible conversion of 2-phosphoglycerate (2-PG) into phosphoenolpyruvate (PEP). It is essential for the degradation of carbohydrates via glycolysis. This is Enolase from Paracoccus denitrificans (strain Pd 1222).